A 183-amino-acid polypeptide reads, in one-letter code: MTEQTYCDRLVQDTPFLTSLGRLSEQQVDRIILQLNRYYPQILSNKDAEKFRNPKLSLRVRLCDLLGHLQRSGERDCQEFYRALYIHAQPLHSCLPSRHALQNSDCTELDSGNASCELSDRGPVAFLTCLGLAAGLALLIYCCPPDPKVLPGARRVLGFSPVIIDRHVSRFLLAFLTDDLGGL.

Cysteine 7 and cysteine 77 form a disulfide bridge. The 92-residue stretch at 8–99 (DRLVQDTPFL…PLHSCLPSRH (92 aa)) folds into the CARD domain. Residues 122 to 142 (GPVAFLTCLGLAAGLALLIYC) traverse the membrane as a helical segment.

In terms of assembly, associates with BCL10 by CARD-CARD interaction.

The protein resides in the endoplasmic reticulum membrane. Its subcellular location is the mitochondrion membrane. In terms of biological role, plays a role in inhibiting the effects of BCL10-induced activation of NF-kappa-B. May inhibit the phosphorylation of BCL10 in a CARD-dependent manner. The sequence is that of Caspase recruitment domain-containing protein 19 (CARD19) from Bos taurus (Bovine).